Reading from the N-terminus, the 556-residue chain is Thermosome subunit beta (556 aa).

The interval 530–556 (LSTDKGDDDGGAGGMGGGMGGGMGGMM) is disordered. Residues 540–556 (GAGGMGGGMGGGMGGMM) show a composition bias toward gly residues.

The protein belongs to the TCP-1 chaperonin family. In terms of assembly, forms an oligomeric complex of eight-membered rings.

In terms of biological role, molecular chaperone; binds unfolded polypeptides in vitro, and has a weak ATPase activity. This is Thermosome subunit beta (thsB) from Halobacterium salinarum (strain ATCC 700922 / JCM 11081 / NRC-1) (Halobacterium halobium).